The chain runs to 200 residues: Holliday junction resolvase RecU (200 aa).

Mg(2+)-binding residues include Thr-85, Asp-87, Glu-100, and Gln-119.

The protein belongs to the RecU family. Mg(2+) is required as a cofactor.

The protein localises to the cytoplasm. It catalyses the reaction Endonucleolytic cleavage at a junction such as a reciprocal single-stranded crossover between two homologous DNA duplexes (Holliday junction).. Endonuclease that resolves Holliday junction intermediates in genetic recombination. Cleaves mobile four-strand junctions by introducing symmetrical nicks in paired strands. Promotes annealing of linear ssDNA with homologous dsDNA. Required for DNA repair, homologous recombination and chromosome segregation. This Bacillus cytotoxicus (strain DSM 22905 / CIP 110041 / 391-98 / NVH 391-98) protein is Holliday junction resolvase RecU.